A 317-amino-acid polypeptide reads, in one-letter code: uncharacterized protein (317 aa).

A signal peptide spans 1–16; that stretch reads MKLSFILSTLVAGALA. Asparagine 42 carries an N-linked (GlcNAc...) asparagine glycan. Composition is skewed to low complexity over residues 150-238 and 247-259; these read SSST…SSSS and TAST…ASSA. The disordered stretch occupies residues 150–259; it reads SSSTPSSSSS…TDDSSSASSA (110 aa).

This is an uncharacterized protein from Schizosaccharomyces pombe (strain 972 / ATCC 24843) (Fission yeast).